The sequence spans 201 residues: Recombination protein RecR (201 aa).

The segment at 60 to 75 adopts a C4-type zinc-finger fold; sequence CSRCGNVDTVDPCTVC. Residues 83–178 form the Toprim domain; that stretch reads SVIIVVEDVA…KITRLAHGVP (96 aa).

The protein belongs to the RecR family.

Its function is as follows. May play a role in DNA repair. It seems to be involved in an RecBC-independent recombinational process of DNA repair. It may act with RecF and RecO. This Rhizobium rhizogenes (strain K84 / ATCC BAA-868) (Agrobacterium radiobacter) protein is Recombination protein RecR.